The chain runs to 266 residues: Vitamin B12-binding protein (266 aa).

A signal peptide spans 1-22 (MAKSLFRALVALSFLAPLWLNA). The Fe/B12 periplasmic-binding domain occupies 25–266 (RVITLSPANT…QLCNALSQVD (242 aa)). Cyanocob(III)alamin is bound by residues Tyr50 and 242-246 (DWFER). Cysteines 183 and 259 form a disulfide.

Belongs to the BtuF family. As to quaternary structure, the complex is composed of two ATP-binding proteins (BtuD), two transmembrane proteins (BtuC) and a solute-binding protein (BtuF).

It is found in the periplasm. In terms of biological role, part of the ABC transporter complex BtuCDF involved in vitamin B12 import. Binds vitamin B12 and delivers it to the periplasmic surface of BtuC. The protein is Vitamin B12-binding protein (btuF) of Escherichia coli (strain K12).